A 60-amino-acid chain; its full sequence is Toxin C10S2C2 (60 aa).

Intrachain disulfides connect Cys3–Cys22, Cys17–Cys39, Cys41–Cys52, and Cys53–Cys58. The tract at residues 41 to 48 (CPTAMWPY) is important for binding to L-type calcium channels.

It belongs to the three-finger toxin family. Short-chain subfamily. L-type calcium blocker sub-subfamily. As to expression, expressed by the venom gland.

It is found in the secreted. In terms of biological role, this specific blocker of the L-type calcium channel (Cav1/CACNA1) is a smooth muscle relaxant and an inhibitor of cardiac contractions. The protein is Toxin C10S2C2 of Dendroaspis angusticeps (Eastern green mamba).